The chain runs to 440 residues: Adenylosuccinate synthetase (440 aa).

GTP-binding positions include 11–17 (GDEGKGG) and 39–41 (GHT). Asp12 functions as the Proton acceptor in the catalytic mechanism. 2 residues coordinate Mg(2+): Asp12 and Gly39. IMP is bound by residues 12–15 (DEGK), 37–40 (NAGH), Thr127, Arg141, Gln230, Thr245, and Arg311. The active-site Proton donor is the His40. 307–313 (TVTGRPR) serves as a coordination point for substrate. GTP is bound by residues Arg313, 339-341 (HLD), and 424-426 (GVG).

It belongs to the adenylosuccinate synthetase family. Homodimer. The cofactor is Mg(2+).

The protein localises to the cytoplasm. It carries out the reaction IMP + L-aspartate + GTP = N(6)-(1,2-dicarboxyethyl)-AMP + GDP + phosphate + 2 H(+). It participates in purine metabolism; AMP biosynthesis via de novo pathway; AMP from IMP: step 1/2. In terms of biological role, plays an important role in the de novo pathway of purine nucleotide biosynthesis. Catalyzes the first committed step in the biosynthesis of AMP from IMP. The chain is Adenylosuccinate synthetase from Halobacterium salinarum (strain ATCC 29341 / DSM 671 / R1).